Here is a 162-residue protein sequence, read N- to C-terminus: NADH-quinone oxidoreductase subunit I (162 aa).

4Fe-4S ferredoxin-type domains follow at residues 54–83 (RRYE…IESE) and 93–122 (TRYD…ETHI). Cysteine 63, cysteine 66, cysteine 69, cysteine 73, cysteine 102, cysteine 105, cysteine 108, and cysteine 112 together coordinate [4Fe-4S] cluster.

The protein belongs to the complex I 23 kDa subunit family. As to quaternary structure, NDH-1 is composed of 14 different subunits. Subunits NuoA, H, J, K, L, M, N constitute the membrane sector of the complex. The cofactor is [4Fe-4S] cluster.

It is found in the cell inner membrane. The enzyme catalyses a quinone + NADH + 5 H(+)(in) = a quinol + NAD(+) + 4 H(+)(out). In terms of biological role, NDH-1 shuttles electrons from NADH, via FMN and iron-sulfur (Fe-S) centers, to quinones in the respiratory chain. The immediate electron acceptor for the enzyme in this species is believed to be ubiquinone. Couples the redox reaction to proton translocation (for every two electrons transferred, four hydrogen ions are translocated across the cytoplasmic membrane), and thus conserves the redox energy in a proton gradient. The protein is NADH-quinone oxidoreductase subunit I of Paraburkholderia xenovorans (strain LB400).